The following is a 108-amino-acid chain: UPF0145 protein MADE_1007770 (108 aa).

This sequence belongs to the UPF0145 family.

In Alteromonas mediterranea (strain DSM 17117 / CIP 110805 / LMG 28347 / Deep ecotype), this protein is UPF0145 protein MADE_1007770.